The chain runs to 212 residues: MSTENTNTAVAEEIPNLLITPSAQEYLHELLAKQNTPGIGVRIFVEHPGTPRAECCMAYSAPEEVVPTDYKQDYPDFPAYIDAPSIPYLLDAVIDYNKDRFGGQLTFRAPNSKVPRVGPDASIEERITYVLQAEINPGLAGHGGNCSLVEVQDDPEHGLTAVLKFGGGCQGCSAIDVTLKQGVETTLKEHILELQRVVDQTDHTQAEGAYFK.

Residues Cys-169 and Cys-172 each contribute to the [4Fe-4S] cluster site.

The protein belongs to the NfuA family. As to quaternary structure, homodimer. Requires [4Fe-4S] cluster as cofactor.

Functionally, involved in iron-sulfur cluster biogenesis. Binds a 4Fe-4S cluster, can transfer this cluster to apoproteins, and thereby intervenes in the maturation of Fe/S proteins. Could also act as a scaffold/chaperone for damaged Fe/S proteins. This is Fe/S biogenesis protein NfuA from Acinetobacter baumannii (strain SDF).